A 391-amino-acid chain; its full sequence is GTPase Obg (391 aa).

Residues 1 to 159 (MKFVDEASIL…RDLLLELMLL (159 aa)) form the Obg domain. A disordered region spans residues 127 to 147 (NTRFKSSVNRTPRQKTNGTPG). Residues 129–145 (RFKSSVNRTPRQKTNGT) are compositionally biased toward polar residues. The OBG-type G domain maps to 160–333 (ADVGMLGMPN…LCWDVMTFII (174 aa)). GTP-binding positions include 166–173 (GMPNAGKS), 191–195 (FTTLV), 213–216 (DIPG), 283–286 (NKID), and 314–316 (SAA). The Mg(2+) site is built by Ser173 and Thr193.

Belongs to the TRAFAC class OBG-HflX-like GTPase superfamily. OBG GTPase family. Monomer. The cofactor is Mg(2+).

The protein resides in the cytoplasm. An essential GTPase which binds GTP, GDP and possibly (p)ppGpp with moderate affinity, with high nucleotide exchange rates and a fairly low GTP hydrolysis rate. Plays a role in control of the cell cycle, stress response, ribosome biogenesis and in those bacteria that undergo differentiation, in morphogenesis control. The polypeptide is GTPase Obg (Salmonella arizonae (strain ATCC BAA-731 / CDC346-86 / RSK2980)).